The primary structure comprises 583 residues: Probable phosphoglucomutase, cytoplasmic 1 (583 aa).

The alpha-D-glucose 1,6-bisphosphate site is built by R24 and S123. The active-site Phosphoserine intermediate is the S123. 4 residues coordinate Mg(2+): S123, D299, D301, and D303. S123 is modified (phosphoserine). Alpha-D-glucose 1,6-bisphosphate contacts are provided by D303, R304, T367, E386, S388, and K399.

Belongs to the phosphohexose mutase family. In terms of assembly, monomer. Mg(2+) serves as cofactor.

Its subcellular location is the cytoplasm. It carries out the reaction alpha-D-glucose 1-phosphate = alpha-D-glucose 6-phosphate. It catalyses the reaction O-phospho-L-seryl-[protein] + alpha-D-glucose 1-phosphate = alpha-D-glucose 1,6-bisphosphate + L-seryl-[protein]. The catalysed reaction is alpha-D-glucose 1,6-bisphosphate + L-seryl-[protein] = O-phospho-L-seryl-[protein] + alpha-D-glucose 6-phosphate. Its function is as follows. Catalyzes the reversible isomerization of alpha-D-glucose 1-phosphate to alpha-D-glucose 6-phosphate. The mechanism proceeds via the intermediate compound alpha-D-glucose 1,6-bisphosphate. This enzyme participates in both the breakdown and synthesis of glucose. The polypeptide is Probable phosphoglucomutase, cytoplasmic 1 (Arabidopsis thaliana (Mouse-ear cress)).